Reading from the N-terminus, the 527-residue chain is Inositolphosphotransferase 1 (527 aa).

Residues 1 to 24 lie on the Cytoplasmic side of the membrane; it reads MNVIFSLASFVKNMYNASLNQRNL. The helical transmembrane segment at 25–45 threads the bilayer; it reads ISLPFNFMLNFAPVFIWLSIF. Residues 46-99 lie on the Lumenal side of the membrane; the sequence is KRAGLIPIRLRPDIHSKFAFFADQFLFGDYWHELTVQLPDNTSKLFFWSFISSS. A helical membrane pass occupies residues 100–120; the sequence is AFLLVFLICIPFAIWYYIYYI. Residues 121–152 lie on the Cytoplasmic side of the membrane; sequence KHVNYNLLEWFANIFHYPCKRKQRPIQKRFRT. The chain crosses the membrane as a helical span at residues 153-173; the sequence is IFIPFALPLFTFVILNIDHFF. Residues 174-190 lie on the Lumenal side of the membrane; the sequence is AYQSDANFTKTKDLLAW. A helical transmembrane segment spans residues 191 to 211; that stretch reads FSYVILHLTAPILTAVYLYVF. The Cytoplasmic portion of the chain corresponds to 212–219; that stretch reads QPPGTLKC. The chain crosses the membrane as a helical span at residues 220-240; that stretch reads FSFALGLQNIAGVLTHLLVPM. Topologically, residues 241–288 are lumenal; that stretch reads ASPWFTHLYGIDDTEHVNYTQEGFAAGLIRVDSHLGTHLNTKGFHMSP. The helical transmembrane segment at 289–309 threads the bilayer; it reads IVFGAVPSLHSAIAFQCFLFL. Residues 310–435 are Cytoplasmic-facing; that stretch reads VSRSTSLKHR…KWIFKIVNDG (126 aa). Residues 331–404 are disordered; it reads NDSSTFKLSE…GGGDGSIINS (74 aa). Positions 376–389 are enriched in low complexity; it reads ERSSSPSSSFTVSS. A helical transmembrane segment spans residues 436–456; sequence FIPKFWAILYIILQWWATMYL. Topologically, residues 457 to 461 are lumenal; sequence DHHYR. A helical transmembrane segment spans residues 462–482; sequence FDLFVGVLYAMTSFIIINWFV. Residues 483–527 are Cytoplasmic-facing; sequence LQPKVLKKWIHIRLGDKVDTRNEARTFGMRVFCGTKMEWFFDPLA.

The protein localises to the golgi apparatus membrane. It catalyses the reaction an alpha-D-mannosyl-(1&lt;-&gt;6)-1D-myo-inositol-1-phospho-N-[(R)-2-hydroxy-very-long-chain fatty acyl]-(R)-4-hydroxysphingoid base + a 1,2-diacyl-sn-glycero-3-phospho-(1D-myo-inositol) = an alpha-D-mannosyl-6-(1D-myo-inositol phospho)-(1&lt;-&gt;6)-1D-myo-inositol-1-phospho-N-[(R)-2-hydroxy-very-long-chain fatty acyl]-(R)-4-hydroxysphingoid base + a 1,2-diacyl-sn-glycerol. It carries out the reaction a mannosylinositol-1-phospho-N-acyl-sphingoid base + a 1,2-diacyl-sn-glycero-3-phospho-(1D-myo-inositol) = an inositol phosphomannosylnositol-1-phospho-N-acylsphingoid base + a 1,2-diacyl-sn-glycerol. The catalysed reaction is a mannosylinositol-1-phospho-N-(2-hydroxyacyl)-4R-hydroxysphingoid base + a 1,2-diacyl-sn-glycero-3-phospho-(1D-myo-inositol) = an inositol phosphomannosylnositol-1-phospho-N-(2-hydroxyacyl)-4R-hydroxysphingoid base + a 1,2-diacyl-sn-glycerol. In terms of biological role, catalyzes the addition of a phosphorylinositol group onto mannosyl phosphorylinositol ceramide (MIPC) to form mannosyl diphosphorylinositol ceramide (M(IP)2C), the major sphingolipid in membranes of S.cerevisiae. The sequence is that of Inositolphosphotransferase 1 from Saccharomyces cerevisiae (strain ATCC 204508 / S288c) (Baker's yeast).